A 789-amino-acid polypeptide reads, in one-letter code: Aryl hydrocarbon receptor nuclear translocator (789 aa).

Over residues methionine 1–valine 14 the composition is skewed to polar residues. Positions methionine 1–isoleucine 97 are disordered. Alanine 2 is modified (N-acetylalanine). Positions serine 26–alanine 35 are enriched in gly residues. Lysine 58 is covalently cross-linked (Glycyl lysine isopeptide (Lys-Gly) (interchain with G-Cter in SUMO2)). Residues leucine 60–isoleucine 97 show a composition bias toward basic and acidic residues. Serine 77 bears the Phosphoserine mark. The tract at residues arginine 88 to lysine 128 is DNA-binding. The region spanning leucine 89–leucine 142 is the bHLH domain. The interval leucine 112–isoleucine 168 is required for heterodimer formation with HIF1A. The interval leucine 112 to isoleucine 264 is required for heterodimer formation with EPAS1. 2 PAS domains span residues aspartate 161–arginine 235 and proline 349–lysine 419. The interval leucine 167–alanine 171 is mediates the transcription activity and dimerization of the AHR:ARNT complex. A PAC domain is found at serine 424–serine 467. A compositionally biased stretch (polar residues) spans lysine 465 to arginine 481. Disordered stretches follow at residues lysine 465–leucine 492 and threonine 672–glutamate 789. The span at threonine 672–serine 696 shows a compositional bias: low complexity. The span at threonine 708–threonine 719 shows a compositional bias: polar residues. Composition is skewed to low complexity over residues valine 723–glutamine 733 and glutamine 743–proline 756.

Monomer. Homodimer only upon binding to a DNA. Efficient DNA binding requires dimerization with another bHLH protein. Interacts with TACC3. Interacts with HIF1A, EPAS1, NPAS1 and NPAS3; forms a heterodimer that binds core DNA sequence 5'-TACGTG-3' within the hypoxia response element (HRE) of target gene promoters. Forms a heterodimer with AHRR, as well as with other bHLH proteins. Interacts with NOCA7. Interacts with TACC3. Interacts with AHR; the heterodimer ARNT:AHR binds to core DNA sequence 5'-TGCGTG-3' within the dioxin response element (DRE) of target gene promoters and activates their transcription. Interacts with SIM1 and NPAS4.

Its subcellular location is the nucleus. Required for activity of the AHR. Upon ligand binding, AHR translocates into the nucleus, where it heterodimerizes with ARNT and induces transcription by binding to xenobiotic response elements (XRE). Not required for the ligand-binding subunit to translocate from the cytosol to the nucleus after ligand binding. The complex initiates transcription of genes involved in the regulation of a variety of biological processes, including angiogenesis, hematopoiesis, drug and lipid metabolism, cell motility and immune modulation. The heterodimer binds to core DNA sequence 5'-TACGTG-3' within the hypoxia response element (HRE) of target gene promoters and functions as a transcriptional regulator of the adaptive response to hypoxia. The heterodimer ARNT:AHR binds to core DNA sequence 5'-TGCGTG-3' within the dioxin response element (DRE) of target gene promoters and activates their transcription. In Homo sapiens (Human), this protein is Aryl hydrocarbon receptor nuclear translocator.